Reading from the N-terminus, the 362-residue chain is Epoxide hydrolase 4 (362 aa).

Residues 17–37 (SLLFWSLVYCYCGLCASIHLL) traverse the membrane as a helical; Signal-anchor for type II membrane protein segment. The AB hydrolase-1 domain occupies 94–211 (PLMLLLHGFP…EYILRHPAQL (118 aa)). Asp169 serves as the catalytic Nucleophile. The Proton donor role is filled by Tyr281. His336 serves as the catalytic Proton acceptor.

The protein belongs to the AB hydrolase superfamily. Epoxide hydrolase family.

It is found in the membrane. This chain is Epoxide hydrolase 4 (EPHX4), found in Homo sapiens (Human).